The chain runs to 61 residues: Large ribosomal subunit protein bL32 (61 aa).

The protein belongs to the bacterial ribosomal protein bL32 family.

The protein is Large ribosomal subunit protein bL32 of Ehrlichia canis (strain Jake).